Here is a 432-residue protein sequence, read N- to C-terminus: Serine hydroxymethyltransferase (432 aa).

Residues leucine 131 and 135-137 (GHL) each bind (6S)-5,6,7,8-tetrahydrofolate. Lysine 240 carries the N6-(pyridoxal phosphate)lysine modification.

This sequence belongs to the SHMT family. In terms of assembly, homodimer. It depends on pyridoxal 5'-phosphate as a cofactor.

The protein localises to the cytoplasm. It catalyses the reaction (6R)-5,10-methylene-5,6,7,8-tetrahydrofolate + glycine + H2O = (6S)-5,6,7,8-tetrahydrofolate + L-serine. Its pathway is one-carbon metabolism; tetrahydrofolate interconversion. It functions in the pathway amino-acid biosynthesis; glycine biosynthesis; glycine from L-serine: step 1/1. Its function is as follows. Catalyzes the reversible interconversion of serine and glycine with tetrahydrofolate (THF) serving as the one-carbon carrier. This reaction serves as the major source of one-carbon groups required for the biosynthesis of purines, thymidylate, methionine, and other important biomolecules. Also exhibits THF-independent aldolase activity toward beta-hydroxyamino acids, producing glycine and aldehydes, via a retro-aldol mechanism. The polypeptide is Serine hydroxymethyltransferase (Bradyrhizobium diazoefficiens (strain JCM 10833 / BCRC 13528 / IAM 13628 / NBRC 14792 / USDA 110)).